The primary structure comprises 951 residues: 2-oxoglutarate dehydrogenase E1 component (951 aa).

The disordered stretch occupies residues 906-925 (RRRRSSPAEGNPTAHKQEQA).

This sequence belongs to the alpha-ketoglutarate dehydrogenase family. As to quaternary structure, homodimer. Part of the 2-oxoglutarate dehydrogenase (OGDH) complex composed of E1 (2-oxoglutarate dehydrogenase), E2 (dihydrolipoamide succinyltransferase) and E3 (dihydrolipoamide dehydrogenase); the complex contains multiple copies of the three enzymatic components (E1, E2 and E3). Requires thiamine diphosphate as cofactor.

The catalysed reaction is N(6)-[(R)-lipoyl]-L-lysyl-[protein] + 2-oxoglutarate + H(+) = N(6)-[(R)-S(8)-succinyldihydrolipoyl]-L-lysyl-[protein] + CO2. Its function is as follows. E1 component of the 2-oxoglutarate dehydrogenase (OGDH) complex which catalyzes the decarboxylation of 2-oxoglutarate, the first step in the conversion of 2-oxoglutarate to succinyl-CoA and CO(2). The protein is 2-oxoglutarate dehydrogenase E1 component of Exiguobacterium sp. (strain ATCC BAA-1283 / AT1b).